A 290-amino-acid polypeptide reads, in one-letter code: 4-hydroxybenzoate octaprenyltransferase (290 aa).

8 helical membrane-spanning segments follow: residues 33-53 (LAAL…AVFV), 91-111 (LGVR…FVLV), 116-136 (WEAV…PFTK), 138-158 (FFAM…VIAF), 165-185 (VPAT…AYDT), 212-232 (VAAI…VLAP), 237-257 (WPLW…FTLI), and 269-289 (FSKS…GYLL).

It belongs to the UbiA prenyltransferase family. Requires Mg(2+) as cofactor.

The protein resides in the cell inner membrane. The enzyme catalyses all-trans-octaprenyl diphosphate + 4-hydroxybenzoate = 4-hydroxy-3-(all-trans-octaprenyl)benzoate + diphosphate. Its pathway is cofactor biosynthesis; ubiquinone biosynthesis. In terms of biological role, catalyzes the prenylation of para-hydroxybenzoate (PHB) with an all-trans polyprenyl group. Mediates the second step in the final reaction sequence of ubiquinone-8 (UQ-8) biosynthesis, which is the condensation of the polyisoprenoid side chain with PHB, generating the first membrane-bound Q intermediate 3-octaprenyl-4-hydroxybenzoate. The chain is 4-hydroxybenzoate octaprenyltransferase from Acidovorax ebreus (strain TPSY) (Diaphorobacter sp. (strain TPSY)).